Here is a 210-residue protein sequence, read N- to C-terminus: DNA replication complex GINS protein PSF3 (210 aa).

It belongs to the GINS3/PSF3 family. As to quaternary structure, component of the GINS complex which is a heterotetramer of gins1/psf1, gins2/psf2, gins3/psf3 and gins4/sld5. Component of the CMG helicase complex, composed of the mcm2-7 complex, the GINS complex and cdc45.

It localises to the nucleus. Its subcellular location is the chromosome. Required for correct functioning of the GINS complex, a complex that plays an essential role in the initiation of DNA replication, and progression of DNA replication forks. GINS complex is a core component of CDC45-MCM-GINS (CMG) helicase, the molecular machine that unwinds template DNA during replication, and around which the replisome is built. This chain is DNA replication complex GINS protein PSF3, found in Xenopus laevis (African clawed frog).